The sequence spans 283 residues: NAD kinase (283 aa).

Aspartate 67 serves as the catalytic Proton acceptor. NAD(+)-binding positions include 67 to 68, arginine 72, 136 to 137, lysine 147, arginine 164, aspartate 166, 177 to 182, and glutamine 236; these read DG, NE, and TAYSMS.

This sequence belongs to the NAD kinase family. It depends on a divalent metal cation as a cofactor.

The protein localises to the cytoplasm. It catalyses the reaction NAD(+) + ATP = ADP + NADP(+) + H(+). Involved in the regulation of the intracellular balance of NAD and NADP, and is a key enzyme in the biosynthesis of NADP. Catalyzes specifically the phosphorylation on 2'-hydroxyl of the adenosine moiety of NAD to yield NADP. This chain is NAD kinase, found in Methanothermobacter thermautotrophicus (strain ATCC 29096 / DSM 1053 / JCM 10044 / NBRC 100330 / Delta H) (Methanobacterium thermoautotrophicum).